The primary structure comprises 438 residues: Keratin, type I cytoskeletal 18 (438 aa).

The interval 4–83 is head; the sequence is AVSSRSTVVS…TLSGNAVISN (80 aa). Positions 84 to 119 are coil 1A; it reads EKETMQDLNDRLSNYLETVRRLENANQQLEIQIREA. An IF rod domain is found at 84–395; the sequence is EKETMQDLND…HLLGGEDSDT (312 aa). The interval 120–136 is linker 1; sequence MEKRGPSVRDYSNYEKI. The coil 1B stretch occupies residues 137–228; sequence IKELRDQIYD…KNHEDEVIAL (92 aa). A linker 12 region spans residues 229 to 252; the sequence is RNQVNSCGVQVDLDAPKGTDLAEI. The tract at residues 253 to 393 is coil 2; sequence MATLRAEYEA…YRHLLGGEDS (141 aa). A tail region spans residues 394 to 438; the sequence is DTLSLQDALSAMKVSNVQTVQKIVVTTQKLVDGKVVEDSTVTETK.

The protein belongs to the intermediate filament family. Heterotetramer of two type I and two type II keratins. Keratin-18 associates with keratin-8. In terms of processing, phosphorylated. Proteolytically cleaved by caspases during epithelial cell apoptosis. In terms of tissue distribution, expressed at low levels in skin.

When phosphorylated, plays a role in filament reorganization. In Protopterus aethiopicus (Marbled lungfish), this protein is Keratin, type I cytoskeletal 18.